Consider the following 298-residue polypeptide: MIRHAPRHLRQMQIFDAVARHLSFSNAARELGLTQPAVSLQIKQIEALAGLPLFEQMGRVLLLTQAGTILLGHVRTILAAVTDADKAMDALKGKRAGALRIGVVSTAKYFAPRLLSVFTAGYPGVELGLTVANREQILGMIQENALDLFIMGRPPTEPAVRAELAPNPMVMVAASDHLVRRKLTFHDLSGETFLMREPGSGTRILMEKLMTDHGVLPHRMIEMSSNETIKQAVMAGMGISLLSRNTMSLELSVGRLVILDVEGLPIQRDWYVVIREGKHLAPVAEAMVAFLKAAARTC.

The HTH lysR-type domain occupies 7 to 64 (RHLRQMQIFDAVARHLSFSNAARELGLTQPAVSLQIKQIEALAGLPLFEQMGRVLLLT). A DNA-binding region (H-T-H motif) is located at residues 24–43 (FSNAARELGLTQPAVSLQIK).

It belongs to the LysR transcriptional regulatory family.

In terms of biological role, transcriptional activator for the cbb operon for RuBisCO and other Calvin cycle genes. The chain is HTH-type transcriptional regulator CbbR (cbbR) from Rhodospirillum rubrum.